The sequence spans 146 residues: UPF0178 protein BCA_3127 (146 aa).

The protein belongs to the UPF0178 family.

The polypeptide is UPF0178 protein BCA_3127 (Bacillus cereus (strain 03BB102)).